We begin with the raw amino-acid sequence, 587 residues long: Trans-activating transcriptional regulatory protein (587 aa).

Belongs to the nucleopolyhedrovirus IE-1 protein family.

Regulatory transcriptional protein, which trans-activates gene expression from early baculovirus promoters. Can also trans-activate its own promoter, suggesting that it is autoregulated during normal infection of insect cells. The protein is Trans-activating transcriptional regulatory protein (IE1) of Bombyx mori nuclear polyhedrosis virus (BmNPV).